A 333-amino-acid chain; its full sequence is MNTDDTITIYDVAREAGVSMATVSRVVNGNKNVKENTRKKVLEVIDRLDYRPNAVARGLASKKTTTVGVVIPNIANAYFSILAKGIDDIATMYKYNIVLASSDEDDDKEVNVINTLFAKQVDGIIFMGHHLTEKIRAEFSRARTPVVLSGTVDLEHQLPSVNIDHSKAAQDAVALLAKHHDKIAFVSGPLIDDINGKVRLAGYKEGLKKKGLPFKEGLVFEAQYKYQEGYQLAQRVINSGATAAYVAEDELAAGLLNGLFAAGKKVPEDFEIITSNDSTIALYTRPNMTSISQPIYDLGAVAMRMLTKIMNKEELEEKEIVLNHGIRERGTTK.

In terms of domain architecture, HTH lacI-type spans 7-61 (ITIYDVAREAGVSMATVSRVVNGNKNVKENTRKKVLEVIDRLDYRPNAVARGLAS). Positions 9-28 (IYDVAREAGVSMATVSRVVN) form a DNA-binding region, H-T-H motif.

Global transcriptional regulator of carbon catabolite repression (CCR) and carbon catabolite activation (CCA), which ensures optimal energy usage under diverse conditions. The protein is Catabolite control protein A (ccpA) of Streptococcus mutans serotype c (strain ATCC 700610 / UA159).